A 79-amino-acid polypeptide reads, in one-letter code: RNA-binding protein KhpA (79 aa).

Residues 32–79 enclose the KH domain; it reads TVVIELRVDPAELGKVIGKQGRIARALRTILTAIGRKIGKRVVLEILE.

This sequence belongs to the KhpA RNA-binding protein family.

The protein localises to the cytoplasm. In terms of biological role, a probable RNA-binding protein. This chain is RNA-binding protein KhpA, found in Aquifex aeolicus (strain VF5).